The primary structure comprises 241 residues: Small ribosomal subunit protein uS2 (241 aa).

The protein belongs to the universal ribosomal protein uS2 family.

The chain is Small ribosomal subunit protein uS2 from Citrobacter koseri (strain ATCC BAA-895 / CDC 4225-83 / SGSC4696).